Consider the following 344-residue polypeptide: Chalcone synthase A (344 aa).

Cys-167 is a catalytic residue.

The protein belongs to the thiolase-like superfamily. Chalcone/stilbene synthases family.

It catalyses the reaction (E)-4-coumaroyl-CoA + 3 malonyl-CoA + 3 H(+) = 2',4,4',6'-tetrahydroxychalcone + 3 CO2 + 4 CoA. The protein operates within secondary metabolite biosynthesis; flavonoid biosynthesis. The primary product of this enzyme is 4,2',4',6'-tetrahydroxychalcone (also termed naringenin-chalcone or chalcone) which can under specific conditions spontaneously isomerize into naringenin. The protein is Chalcone synthase A (CHSA) of Ipomoea nil (Japanese morning glory).